A 311-amino-acid chain; its full sequence is Porphobilinogen deaminase (311 aa).

Cys243 carries the post-translational modification S-(dipyrrolylmethanemethyl)cysteine.

Belongs to the HMBS family. In terms of assembly, monomer. Requires dipyrromethane as cofactor.

It catalyses the reaction 4 porphobilinogen + H2O = hydroxymethylbilane + 4 NH4(+). It functions in the pathway porphyrin-containing compound metabolism; protoporphyrin-IX biosynthesis; coproporphyrinogen-III from 5-aminolevulinate: step 2/4. Tetrapolymerization of the monopyrrole PBG into the hydroxymethylbilane pre-uroporphyrinogen in several discrete steps. The polypeptide is Porphobilinogen deaminase (Aliivibrio salmonicida (strain LFI1238) (Vibrio salmonicida (strain LFI1238))).